Here is a 153-residue protein sequence, read N- to C-terminus: Catabolic 3-dehydroquinase (153 aa).

Tyr-24 functions as the Proton acceptor in the catalytic mechanism. Positions 75, 81, and 88 each coordinate substrate. The active-site Proton donor is His-101. Residues 102–103 (VS) and Arg-112 each bind substrate.

Belongs to the type-II 3-dehydroquinase family. Homododecamer. Adopts a ring-like structure, composed of an arrangement of two hexameric rings stacked on top of one another.

The enzyme catalyses 3-dehydroquinate = 3-dehydroshikimate + H2O. The protein operates within aromatic compound metabolism; 3,4-dihydroxybenzoate biosynthesis; 3,4-dihydroxybenzoate from 3-dehydroquinate: step 1/2. In terms of biological role, is involved in the catabolism of quinate. Allows the utilization of quinate as carbon source via the beta-ketoadipate pathway. This Emericella nidulans (strain FGSC A4 / ATCC 38163 / CBS 112.46 / NRRL 194 / M139) (Aspergillus nidulans) protein is Catabolic 3-dehydroquinase.